The following is a 276-amino-acid chain: Ubiquinone biosynthesis protein coq11, mitochondrial (276 aa).

It belongs to the NAD(P)-dependent epimerase/dehydratase family.

The protein resides in the mitochondrion. In terms of biological role, acts in the coenzyme Q biosynthetic pathway. This chain is Ubiquinone biosynthesis protein coq11, mitochondrial, found in Schizosaccharomyces pombe (strain 972 / ATCC 24843) (Fission yeast).